The primary structure comprises 245 residues: MVLNSDLTTQDKERIINPIERPTVTQDLSENVILTTVDDLYNWARLSSLWPLLFGTACCFIEFAALIGSRFDFDRFGLIPRSSPRQADLIITAGTITMKMAPQLVRLYEQMPEPKYVIAMGACTITGGMFSVDSPTAVRGVDKLIPVDVYLPGCPPRPEAIIDAIIKLRKKIANDSMQERSLIRQTHRFYSTTHNLKPVAEILTGKYMQSETRFNPPKELTEAIGLPVPPALLTSQTQKEEQKRG.

Cys-58, Cys-59, Cys-123, and Cys-154 together coordinate [4Fe-4S] cluster.

This sequence belongs to the complex I 20 kDa subunit family. As to quaternary structure, NDH-1 can be composed of about 15 different subunits; different subcomplexes with different compositions have been identified which probably have different functions. It depends on [4Fe-4S] cluster as a cofactor.

The protein localises to the cellular thylakoid membrane. It catalyses the reaction a plastoquinone + NADH + (n+1) H(+)(in) = a plastoquinol + NAD(+) + n H(+)(out). The catalysed reaction is a plastoquinone + NADPH + (n+1) H(+)(in) = a plastoquinol + NADP(+) + n H(+)(out). NDH-1 shuttles electrons from an unknown electron donor, via FMN and iron-sulfur (Fe-S) centers, to quinones in the respiratory and/or the photosynthetic chain. The immediate electron acceptor for the enzyme in this species is believed to be plastoquinone. Couples the redox reaction to proton translocation, and thus conserves the redox energy in a proton gradient. Cyanobacterial NDH-1 also plays a role in inorganic carbon-concentration. This is NAD(P)H-quinone oxidoreductase subunit K from Trichormus variabilis (strain ATCC 29413 / PCC 7937) (Anabaena variabilis).